The chain runs to 184 residues: ADP-ribosylation factor-like protein 2 (184 aa).

Glycine 2 is lipidated: N-myristoyl glycine. Position 23–30 (glycine 23–threonine 30) interacts with GTP. Serine 45 is modified (phosphoserine). GTP-binding positions include aspartate 66 to glutamine 70 and glycine 68. Lysine 71 participates in a covalent cross-link: Glycyl lysine isopeptide (Lys-Gly) (interchain with G-Cter in ubiquitin). Asparagine 125 to aspartate 128 contacts GTP.

Belongs to the small GTPase superfamily. Arf family. As to quaternary structure, found in a complex with ARL2, ARL2BP and SLC25A6. Found in a complex with at least ARL2, PPP2CB, PPP2R1A, PPP2R2A, PPP2R5E and TBCD. Interacts with ELMOD2. The GTP-bound form interacts with ARL2BP. The GDP-bound form interacts preferentially with TBCD. Interacts with UNC119. Found in a complex with ARL2, ARL2BP and SLC25A4. The GTP-bound form interacts with PDE6D. Post-translationally, not N-myristoylated. In terms of tissue distribution, expressed in brain, retina, lung, cerebellum, liver, kidney, hippocampus, spleen, cortex and heart (at protein level).

It localises to the mitochondrion intermembrane space. It is found in the cytoplasm. The protein localises to the cytoskeleton. The protein resides in the microtubule organizing center. Its subcellular location is the centrosome. It localises to the nucleus. Its function is as follows. Small GTP-binding protein which cycles between an inactive GDP-bound and an active GTP-bound form, and the rate of cycling is regulated by guanine nucleotide exchange factors (GEF) and GTPase-activating proteins (GAP). GTP-binding protein that does not act as an allosteric activator of the cholera toxin catalytic subunit. Regulates formation of new microtubules and centrosome integrity. Prevents the TBCD-induced microtubule destruction. Participates in association with TBCD, in the disassembly of the apical junction complexes. Antagonizes the effect of TBCD on epithelial cell detachment and tight and adherens junctions disassembly. Together with ARL2, plays a role in the nuclear translocation, retention and transcriptional activity of STAT3. Component of a regulated secretory pathway involved in Ca(2+)-dependent release of acetylcholine. Required for normal progress through the cell cycle. This chain is ADP-ribosylation factor-like protein 2 (Arl2), found in Rattus norvegicus (Rat).